The sequence spans 781 residues: Toll-like receptor 2 type-2 (781 aa).

Positions 1-24 (MHTWKMWAICTALAAHLPEEQALR) are cleaved as a signal peptide. Residues 25–585 (QACLSCDATQ…QLSLMECHRS (561 aa)) lie on the Extracellular side of the membrane. Cysteine 30 and cysteine 36 form a disulfide bridge. Residue asparagine 37 is glycosylated (N-linked (GlcNAc...) asparagine). LRR repeat units follow at residues 53-74 (KITV…DLQK), 77-98 (NLRT…SFGS), 101-122 (KLEL…WFGP), 125-146 (SLQH…SPFS), 150-171 (NLSS…NFEG), and 174-195 (FLNT…SLKS). Asparagine 109 carries an N-linked (GlcNAc...) asparagine glycan. Asparagine 150, asparagine 184, asparagine 301, and asparagine 313 each carry an N-linked (GlcNAc...) asparagine glycan. Residues cysteine 350 and cysteine 379 are joined by a disulfide bond. 7 LRR repeats span residues 358–378 (SLEY…EHSA), 385–406 (SLQT…GKSL), 411–432 (NLNL…CEWP), 434–455 (NLKY…IPST), 456–474 (LEVL…LQLP), 475–496 (FLKE…TDIP), and 497–518 (NLVA…EFES). N-linked (GlcNAc...) asparagine glycosylation occurs at asparagine 390. An intrachain disulfide couples cysteine 429 to cysteine 451. N-linked (GlcNAc...) asparagine glycosylation occurs at asparagine 439. In terms of domain architecture, LRRCT spans 530–584 (NNFICSCEFLSFIHHEAGIAQVLVGWPESYICDSPLTVRGAQVGSVQLSLMECHR). A helical membrane pass occupies residues 586 to 606 (LLVSLICTLVFLFILILVVVG). The Cytoplasmic segment spans residues 607-781 (YKYHAVWYMR…WENLKAALKS (175 aa)). Residues 636–779 (ICYDAFVSYS…MFWENLKAAL (144 aa)) enclose the TIR domain.

This sequence belongs to the Toll-like receptor family. Binds MYD88 (via TIR domain). N-glycosylated. As to expression, highly expressed in ovary. Also detected in brain, heart, lung, liver, spleen and kidney, and at low levels in gizzard, muscle, testis and proventriculus.

It localises to the membrane. Functionally, participates in the innate immune response to microbial agents. Acts via MYD88 and TRAF6, leading to NF-kappa-B activation, cytokine secretion and the inflammatory response. Mediates the response to mycoplasmal macrophage-activating lipopeptide-2kD (MALP-2). The protein is Toll-like receptor 2 type-2 (TLR2-2) of Gallus gallus (Chicken).